The chain runs to 650 residues: Fructose-1,6-bisphosphatase class 3 (650 aa).

It belongs to the FBPase class 3 family. Requires Mn(2+) as cofactor.

The enzyme catalyses beta-D-fructose 1,6-bisphosphate + H2O = beta-D-fructose 6-phosphate + phosphate. It functions in the pathway carbohydrate biosynthesis; gluconeogenesis. This is Fructose-1,6-bisphosphatase class 3 from Staphylococcus xylosus.